The following is a 264-amino-acid chain: Heavy metal-associated isoprenylated plant protein 17 (264 aa).

HMA domains are found at residues 32 to 95 (VTDA…KKIE) and 133 to 204 (IMEV…KERQ). Positions 185–218 (SRKLNKKMHQKIKKAEKERQEWESEMMLREAEEE) form a coiled coil. A Cysteine methyl ester modification is found at C261. C261 carries the S-farnesyl cysteine lipid modification. Residues 262 to 264 (SIS) constitute a propeptide, removed in mature form.

It belongs to the HIPP family.

In terms of biological role, probable heavy-metal-binding protein. The chain is Heavy metal-associated isoprenylated plant protein 17 from Arabidopsis thaliana (Mouse-ear cress).